Consider the following 378-residue polypeptide: MQLRLFRRLLLAALLLVIVWTLFGPSGLGEELLSLSLASLLPAPASPGPPLALPRLLIPNQEACSGPGAPPFLLILVCTAPENLNQRNAIRASWGGLREARGLRVQTLFLLGEPNAQHPVWGSQGSDLASESAAQGDILQAAFQDSYRNLTLKTLSGLNWAEKHCPMARYVLKTDDDVYVNVPELVSELVLRGGRWGQWERSTEPQREAEQEGGQVLHSEEVPLLYLGRVHWRVNPSRTPGGRHRVSEEQWPHTWGPFPPYASGTGYVLSASAVQLILKVASRAPLLPLEDVFVGVSARRGGLAPTQCVKLAGATHYPLDRCCYGKFLLTSHRLDPWKMQEAWKLVGGSDGERTAPFCSWFQGVLGILRCRAIAWLQS.

The Cytoplasmic segment spans residues 1 to 8; sequence MQLRLFRR. A helical; Signal-anchor for type II membrane protein transmembrane segment spans residues 9–19; that stretch reads LLLAALLLVIV. The Lumenal portion of the chain corresponds to 20–378; that stretch reads WTLFGPSGLG…RCRAIAWLQS (359 aa). Asparagine 149 carries an N-linked (GlcNAc...) asparagine glycan.

Belongs to the glycosyltransferase 31 family. Highly expressed in heart, skeletal muscle and pancreas and, to a lesser extent, in brain, placenta, kidney, liver and lung.

The protein resides in the golgi apparatus membrane. The enzyme catalyses a ganglioside GM2 (d18:1(4E)) + UDP-alpha-D-galactose = a ganglioside GM1 (d18:1(4E)) + UDP + H(+). The catalysed reaction is a ganglioside GM2 + UDP-alpha-D-galactose = a ganglioside GM1 + UDP + H(+). It carries out the reaction a ganglioside GD2 (d18:1(4E)) + UDP-alpha-D-galactose = a ganglioside GD1b (d18:1(4E)) + UDP + H(+). It catalyses the reaction a ganglioside GA2 (d18:1(4E)) + UDP-alpha-D-galactose = a ganglioside GA1 (d18:1(4E)) + UDP + H(+). The protein operates within protein modification; protein glycosylation. In terms of biological role, involved in GM1/GD1B/GA1 ganglioside biosynthesis. The chain is Beta-1,3-galactosyltransferase 4 from Homo sapiens (Human).